The primary structure comprises 410 residues: Centromere protein U (410 aa).

The disordered stretch occupies residues 1–72; that stretch reads MAARRSLRYS…YETFDPPLHS (72 aa). The Nuclear localization signal signature appears at 4–21; the sequence is RRSLRYSGDPGAKRSRNT. Residues 28-38 are compositionally biased toward basic residues; the sequence is RKQKAGQKPKR. Thr73 carries the phosphothreonine; by PLK1 modification. Positions 87-228 are disordered; that stretch reads SSTSPATHRG…THSDASESMH (142 aa). The segment covering 101–115 has biased composition (polar residues); sequence NLNPSENEASGNDSI. 6 positions are modified to phosphoserine: Ser105, Ser110, Ser114, Ser130, Ser133, and Ser135. Residues 138 to 149 are compositionally biased toward basic and acidic residues; sequence DNVRRSVSIERP. Over residues 158–169 the composition is skewed to low complexity; sequence PAAASSSSSPSE. Lys179 is covalently cross-linked (Glycyl lysine isopeptide (Lys-Gly) (interchain with G-Cter in SUMO2)). Residue Ser186 is modified to Phosphoserine. Residue Thr191 is modified to Phosphothreonine. The segment covering 200 to 218 has biased composition (basic residues); it reads TQKKVRPSPGRRKRPRRGS. Ser224 is modified (phosphoserine). Residues 289–352 are a coiled coil; the sequence is QMLKALKRKN…LKNSKHFLSN (64 aa). Residues 295-312 carry the Nuclear localization signal motif; sequence KRKNTKIISNMEKKRQRL.

The protein belongs to the CENP-U/AME1 family. Component of the CENPA-NAC complex, at least composed of CENPA, CENPC, CENPH, CENPM, CENPN, CENPT and CENPU. The CENPA-NAC complex interacts with the CENPA-CAD complex, composed of CENPI, CENPK, CENPL, CENPO, CENPP, CENPQ, CENPR and CENPS. Interacts with MLF1. Phosphorylated by PLK1 at Thr-73, creating a self-tethering site that specifically interacts with the polo-box domain of PLK1. Expressed at high levels in glioblastoma cell lines. Up-regulated in GBM (glioblastoma multiforme) tumors. Significantly increased in both the tumor core as well as the contralateral striatum and cortex in gliomas.

It localises to the cytoplasm. It is found in the nucleus. The protein localises to the chromosome. Its subcellular location is the centromere. The protein resides in the kinetochore. In terms of biological role, component of the CENPA-NAC (nucleosome-associated) complex, a complex that plays a central role in assembly of kinetochore proteins, mitotic progression and chromosome segregation. The CENPA-NAC complex recruits the CENPA-CAD (nucleosome distal) complex and may be involved in incorporation of newly synthesized CENPA into centromeres. Plays an important role in the correct PLK1 localization to the mitotic kinetochores. A scaffold protein responsible for the initial recruitment and maintenance of the kinetochore PLK1 population until its degradation. Involved in transcriptional repression. The polypeptide is Centromere protein U (Cenpu) (Rattus norvegicus (Rat)).